The primary structure comprises 34 residues: Photosystem II reaction center protein M (34 aa).

Residues 5–25 (ILAFIATALFILVPTAFLLII) form a helical membrane-spanning segment.

It belongs to the PsbM family. As to quaternary structure, PSII is composed of 1 copy each of membrane proteins PsbA, PsbB, PsbC, PsbD, PsbE, PsbF, PsbH, PsbI, PsbJ, PsbK, PsbL, PsbM, PsbT, PsbX, PsbY, PsbZ, Psb30/Ycf12, at least 3 peripheral proteins of the oxygen-evolving complex and a large number of cofactors. It forms dimeric complexes.

It localises to the plastid. The protein resides in the chloroplast thylakoid membrane. One of the components of the core complex of photosystem II (PSII). PSII is a light-driven water:plastoquinone oxidoreductase that uses light energy to abstract electrons from H(2)O, generating O(2) and a proton gradient subsequently used for ATP formation. It consists of a core antenna complex that captures photons, and an electron transfer chain that converts photonic excitation into a charge separation. This subunit is found at the monomer-monomer interface. This Cenchrus americanus (Pearl millet) protein is Photosystem II reaction center protein M.